Here is a 225-residue protein sequence, read N- to C-terminus: Cytochrome c oxidase subunit 2 (225 aa).

Residues 1-26 are Mitochondrial intermembrane-facing; it reads MMTWSQMSFSDMNSPIMEQMVFFHDH. Residues 27-48 traverse the membrane as a helical segment; that stretch reads SMMIILMITILTIYMITNIMMN. Residues 49–62 are Mitochondrial matrix-facing; sequence NLLSRSMMEGQEIE. Residues 63–82 form a helical membrane-spanning segment; the sequence is IIWTIIPAITLIFIAIPSLH. The Mitochondrial intermembrane portion of the chain corresponds to 83 to 225; the sequence is LLYLTDETFN…KNFINFINSS (143 aa). His-160, Cys-195, Glu-197, Cys-199, His-203, and Met-206 together coordinate Cu cation. Glu-197 serves as a coordination point for Mg(2+).

The protein belongs to the cytochrome c oxidase subunit 2 family. In terms of assembly, component of the cytochrome c oxidase (complex IV, CIV), a multisubunit enzyme composed of a catalytic core of 3 subunits and several supernumerary subunits. The complex exists as a monomer or a dimer and forms supercomplexes (SCs) in the inner mitochondrial membrane with ubiquinol-cytochrome c oxidoreductase (cytochrome b-c1 complex, complex III, CIII). Requires Cu cation as cofactor.

Its subcellular location is the mitochondrion inner membrane. It carries out the reaction 4 Fe(II)-[cytochrome c] + O2 + 8 H(+)(in) = 4 Fe(III)-[cytochrome c] + 2 H2O + 4 H(+)(out). Its function is as follows. Component of the cytochrome c oxidase, the last enzyme in the mitochondrial electron transport chain which drives oxidative phosphorylation. The respiratory chain contains 3 multisubunit complexes succinate dehydrogenase (complex II, CII), ubiquinol-cytochrome c oxidoreductase (cytochrome b-c1 complex, complex III, CIII) and cytochrome c oxidase (complex IV, CIV), that cooperate to transfer electrons derived from NADH and succinate to molecular oxygen, creating an electrochemical gradient over the inner membrane that drives transmembrane transport and the ATP synthase. Cytochrome c oxidase is the component of the respiratory chain that catalyzes the reduction of oxygen to water. Electrons originating from reduced cytochrome c in the intermembrane space (IMS) are transferred via the dinuclear copper A center (CU(A)) of subunit 2 and heme A of subunit 1 to the active site in subunit 1, a binuclear center (BNC) formed by heme A3 and copper B (CU(B)). The BNC reduces molecular oxygen to 2 water molecules using 4 electrons from cytochrome c in the IMS and 4 protons from the mitochondrial matrix. This chain is Cytochrome c oxidase subunit 2 (COII), found in Rhipicephalus sanguineus (Brown dog tick).